We begin with the raw amino-acid sequence, 342 residues long: S-adenosylmethionine:tRNA ribosyltransferase-isomerase (342 aa).

This sequence belongs to the QueA family. Monomer.

The protein localises to the cytoplasm. The enzyme catalyses 7-aminomethyl-7-carbaguanosine(34) in tRNA + S-adenosyl-L-methionine = epoxyqueuosine(34) in tRNA + adenine + L-methionine + 2 H(+). It participates in tRNA modification; tRNA-queuosine biosynthesis. Functionally, transfers and isomerizes the ribose moiety from AdoMet to the 7-aminomethyl group of 7-deazaguanine (preQ1-tRNA) to give epoxyqueuosine (oQ-tRNA). The chain is S-adenosylmethionine:tRNA ribosyltransferase-isomerase from Geobacillus kaustophilus (strain HTA426).